A 335-amino-acid chain; its full sequence is MKKIAIDAMGGDHAPKAIVEGVNQAIEAFSDIEVQLYGDQSRIESYLVKSDRVSIVHTDEKINSDDEPAKAIRRKKNASMVLAARAVKDGRADAVLSAGNTGALLAAGLFIIGRIKGVDRPGLLSTLPTVDGSGFDMLDLGANAENTAEHLHQYAILGSFYAKHVRGIAKPRIGLLNNGTEATKGDSLRKEVYNFLASDSSLQFIGNVEARDLMSGVADVVVADGFTGNAVLKSIEGTAMSIMGQLKSAIAVGGVKAKFGALLLKSSLYDLKDTLDYSSAGGAVLFGLKAPLVKSHGSSDAKAIFHTIKQVRTMLETDVVGQLVEEFSKESDVND.

It belongs to the PlsX family. As to quaternary structure, homodimer. Probably interacts with PlsY.

Its subcellular location is the cytoplasm. It catalyses the reaction a fatty acyl-[ACP] + phosphate = an acyl phosphate + holo-[ACP]. It functions in the pathway lipid metabolism; phospholipid metabolism. In terms of biological role, catalyzes the reversible formation of acyl-phosphate (acyl-PO(4)) from acyl-[acyl-carrier-protein] (acyl-ACP). This enzyme utilizes acyl-ACP as fatty acyl donor, but not acyl-CoA. The sequence is that of Phosphate acyltransferase from Streptococcus equi subsp. zooepidemicus (strain MGCS10565).